The sequence spans 379 residues: UDP-4-amino-4-deoxy-L-arabinose--oxoglutarate aminotransferase (379 aa).

Position 182 is an N6-(pyridoxal phosphate)lysine (lysine 182).

The protein belongs to the DegT/DnrJ/EryC1 family. ArnB subfamily. In terms of assembly, homodimer. Requires pyridoxal 5'-phosphate as cofactor.

It carries out the reaction UDP-4-amino-4-deoxy-beta-L-arabinose + 2-oxoglutarate = UDP-beta-L-threo-pentopyranos-4-ulose + L-glutamate. It functions in the pathway nucleotide-sugar biosynthesis; UDP-4-deoxy-4-formamido-beta-L-arabinose biosynthesis; UDP-4-deoxy-4-formamido-beta-L-arabinose from UDP-alpha-D-glucuronate: step 2/3. Its pathway is bacterial outer membrane biogenesis; lipopolysaccharide biosynthesis. Catalyzes the conversion of UDP-4-keto-arabinose (UDP-Ara4O) to UDP-4-amino-4-deoxy-L-arabinose (UDP-L-Ara4N). The modified arabinose is attached to lipid A and is required for resistance to polymyxin and cationic antimicrobial peptides. In Escherichia coli (strain K12 / DH10B), this protein is UDP-4-amino-4-deoxy-L-arabinose--oxoglutarate aminotransferase.